The following is a 417-amino-acid chain: Origin of replication complex subunit 4 (417 aa).

59–66 (GPRGSGKA) provides a ligand contact to ATP.

Belongs to the ORC4 family. In terms of assembly, component of the origin recognition complex (ORC) composed of at least ORC1 (ORC1A or ORC1B), ORC2, ORC3, ORC4, ORC5 and ORC6. ORC is regulated in a cell-cycle and development dependent manner. It is sequentially assembled at the exit from anaphase of mitosis and disassembled as cells enter S phase. Interacts directly with ORC1A, ORC2, ORC3, ORC5 and ORC6. In terms of tissue distribution, follow a cell-cycle regulation with a peak at the G1/S-phase. Isoform AtORC4a is expressed at low levels ubiquitously. Isoform AtORC4b is mostly expressed in siliques, flowers and flower buds, and, to a lower exent, in roots, leaves and stems.

Its subcellular location is the nucleus. Its function is as follows. Component of the origin recognition complex (ORC) that binds origins of replication. DNA-binding is ATP-dependent. The specific DNA sequences that define origins of replication have not been identified yet. ORC is required to assemble the pre-replication complex necessary to initiate DNA replication. This chain is Origin of replication complex subunit 4, found in Arabidopsis thaliana (Mouse-ear cress).